Consider the following 37-residue polypeptide: L-amino-acid oxidase (37 aa).

It belongs to the flavin monoamine oxidase family. FIG1 subfamily. As to quaternary structure, homodimer; non-covalently linked. FAD is required as a cofactor. In terms of processing, N-Glycosylated. In terms of tissue distribution, expressed by the venom gland.

It localises to the secreted. The enzyme catalyses an L-alpha-amino acid + O2 + H2O = a 2-oxocarboxylate + H2O2 + NH4(+). The catalysed reaction is L-leucine + O2 + H2O = 4-methyl-2-oxopentanoate + H2O2 + NH4(+). It catalyses the reaction L-phenylalanine + O2 + H2O = 3-phenylpyruvate + H2O2 + NH4(+). It carries out the reaction L-tryptophan + O2 + H2O = indole-3-pyruvate + H2O2 + NH4(+). The enzyme catalyses L-methionine + O2 + H2O = 4-methylsulfanyl-2-oxobutanoate + H2O2 + NH4(+). The catalysed reaction is L-isoleucine + O2 + H2O = (S)-3-methyl-2-oxopentanoate + H2O2 + NH4(+). It catalyses the reaction L-arginine + O2 + H2O = 5-guanidino-2-oxopentanoate + H2O2 + NH4(+). It carries out the reaction L-histidine + O2 + H2O = 3-(imidazol-5-yl)pyruvate + H2O2 + NH4(+). The enzyme catalyses L-valine + O2 + H2O = 3-methyl-2-oxobutanoate + H2O2 + NH4(+). In terms of biological role, catalyzes an oxidative deamination of predominantly hydrophobic and aromatic L-amino acids, thus producing hydrogen peroxide that may contribute to the diverse toxic effects of this enzyme. Is highly active on L-Leu, L-Met, moderately active on L-Arg, L-Trp, L-Phe, L-Val, L-His, and L-Ile, and is weakly or not active on L-Cys, L-Lys, L-Ala, L-Thr, L-Asp, L-Ser, and L-Pro. Exhibits diverse biological activities, such as hemorrhage, edema, apoptosis of vascular endothelial cells or tumor cell lines, as well as regulation of platelet aggregation. Effects of snake L-amino oxidases on platelets are controversial, since they either induce aggregation or inhibit agonist-induced aggregation. These different effects are probably due to different experimental conditions. This protein induce hemolysis and has antibacterial and antiparasitic activities (against the Gram-positive S.aureus). Tested in vivo, this protein significantly inhibits Ehrlich ascite tumors growth and induces an influx of polymorphonuclear cells, as well as spontaneous liberation of hydrogen peroxide from peritoneal macrophages. The sequence is that of L-amino-acid oxidase from Bothrops jararaca (Jararaca).